Reading from the N-terminus, the 345-residue chain is Dihydroorotate dehydrogenase (quinone) (345 aa).

Residues 65 to 69 (AGLDK) and threonine 89 contribute to the FMN site. Lysine 69 is a substrate binding site. 114 to 118 (NRMGF) provides a ligand contact to substrate. FMN-binding residues include asparagine 142 and asparagine 175. Position 175 (asparagine 175) interacts with substrate. The active-site Nucleophile is serine 178. Asparagine 180 is a binding site for substrate. FMN-binding residues include lysine 220 and threonine 248. 249 to 250 (NT) provides a ligand contact to substrate. Residues glycine 271, glycine 300, and 321–322 (YT) each bind FMN.

Belongs to the dihydroorotate dehydrogenase family. Type 2 subfamily. Monomer. FMN serves as cofactor.

The protein localises to the cell membrane. The catalysed reaction is (S)-dihydroorotate + a quinone = orotate + a quinol. Its pathway is pyrimidine metabolism; UMP biosynthesis via de novo pathway; orotate from (S)-dihydroorotate (quinone route): step 1/1. In terms of biological role, catalyzes the conversion of dihydroorotate to orotate with quinone as electron acceptor. This is Dihydroorotate dehydrogenase (quinone) from Burkholderia thailandensis (strain ATCC 700388 / DSM 13276 / CCUG 48851 / CIP 106301 / E264).